The primary structure comprises 120 residues: Putative pterin-4-alpha-carbinolamine dehydratase (120 aa).

It belongs to the pterin-4-alpha-carbinolamine dehydratase family.

It catalyses the reaction (4aS,6R)-4a-hydroxy-L-erythro-5,6,7,8-tetrahydrobiopterin = (6R)-L-erythro-6,7-dihydrobiopterin + H2O. The polypeptide is Putative pterin-4-alpha-carbinolamine dehydratase (Bdellovibrio bacteriovorus (strain ATCC 15356 / DSM 50701 / NCIMB 9529 / HD100)).